The primary structure comprises 141 residues: Nucleoside diphosphate kinase (141 aa).

The ATP site is built by Lys11, Phe59, Arg87, Thr93, Arg104, and Asn114. The Pros-phosphohistidine intermediate role is filled by His117.

It belongs to the NDK family. In terms of assembly, homotetramer. Requires Mg(2+) as cofactor.

Its subcellular location is the cytoplasm. The enzyme catalyses a 2'-deoxyribonucleoside 5'-diphosphate + ATP = a 2'-deoxyribonucleoside 5'-triphosphate + ADP. It catalyses the reaction a ribonucleoside 5'-diphosphate + ATP = a ribonucleoside 5'-triphosphate + ADP. Major role in the synthesis of nucleoside triphosphates other than ATP. The ATP gamma phosphate is transferred to the NDP beta phosphate via a ping-pong mechanism, using a phosphorylated active-site intermediate. In Nitrosospira multiformis (strain ATCC 25196 / NCIMB 11849 / C 71), this protein is Nucleoside diphosphate kinase.